Reading from the N-terminus, the 621-residue chain is TOX high mobility group box family member 4 (621 aa).

2 disordered regions span residues 153–227 (LGLS…QKPV) and 305–333 (LDPA…ASIE). Thr-176 is subject to Phosphothreonine. 3 positions are modified to phosphoserine: Ser-178, Ser-181, and Ser-182. Over residues 183 to 193 (LHEDGVEDFRR) the composition is skewed to basic and acidic residues. The segment covering 208–218 (KQKAPKKRKKK) has biased composition (basic residues). The short motif at 213–218 (KKRKKK) is the Nuclear localization signal element. Residues 223 to 291 (PQKPVSAYAL…EYLKALAAYK (69 aa)) constitute a DNA-binding region (HMG box). Residues 307–319 (PAPPSQTPSPPPM) are compositionally biased toward pro residues. Position 313 is a phosphothreonine (Thr-313). Residue Ser-315 is modified to Phosphoserine. Residues 320–333 (ATVDPASPAPASIE) are compositionally biased toward low complexity. Arg-481 is modified (asymmetric dimethylarginine). Residues 510–525 (PTVESSPERPMNNSPE) show a composition bias toward polar residues. Residues 510 to 529 (PTVESSPERPMNNSPEAHTV) form a disordered region. Phosphoserine is present on residues Ser-533, Ser-550, Ser-552, Ser-560, Ser-562, and Ser-567.

As to quaternary structure, component of the PNUTS-PP1 phosphatase complex, composed of PPP1R10/PNUTS, TOX4, WDR82 and PPP1CA or PPP1CB or PPP1CC. Interacts with PPP1R10/PNUTS. Interacts with FOXO1 and CREB1 (increased by cAMP); FOXO1 and CREB1 are required for full induction of TOX4-dependent activity and the interactions are inhibited by insulin. As to expression, expressed in liver (at protein level).

Its subcellular location is the nucleus. The protein resides in the chromosome. In liver, recruited to target gene promoters following treatment with dexamethasone and cAMP. Binding is decreased in presence of insulin. Transcription factor that modulates cell fate reprogramming from the somatic state to the pluripotent and neuronal fate. In liver, controls the expression of hormone-regulated gluconeogenic genes such as G6PC1 and PCK1. This regulation is independent of the insulin receptor activation. Also acts as a regulatory component of protein phosphatase 1 (PP1) complexes. Component of the PNUTS-PP1 protein phosphatase complex, a PP1 complex that regulates RNA polymerase II transcription pause-release. PNUTS-PP1 also plays a role in the control of chromatin structure and cell cycle progression during the transition from mitosis into interphase. The protein is TOX high mobility group box family member 4 of Homo sapiens (Human).